The sequence spans 79 residues: MSRKLLAVLMVCTFFLIAASMGTNALPFHEGIERRAAKCVDKMPFVCMRKDIPAICKNRNHRSYAFIMDVCRKTCGQCT.

A signal peptide spans 1 to 25 (MSRKLLAVLMVCTFFLIAASMGTNA). Positions 26–35 (LPFHEGIERR) are excised as a propeptide. The region spanning 39-78 (CVDKMPFVCMRKDIPAICKNRNHRSYAFIMDVCRKTCGQC) is the ShKT domain. Cystine bridges form between Cys39/Cys78, Cys47/Cys71, and Cys56/Cys75.

As to expression, expressed in nematocytes (in planulae and primary polyps). Is localized predominantly in the body column nematocytes and not in the tentacles (in primary polyps).

It is found in the nematocyst. Its subcellular location is the secreted. Neurotoxin. In vivo, induces contraction paralysis followed by death (within 2 hours) on zebrafish larvae. Also induces body contraction in Nematostella 11-dpf polyps. The sequence is that of Neurotoxin ShK-like1 from Nematostella vectensis (Starlet sea anemone).